A 149-amino-acid polypeptide reads, in one-letter code: Large ribosomal subunit protein bL9 (149 aa).

Belongs to the bacterial ribosomal protein bL9 family.

Its function is as follows. Binds to the 23S rRNA. This chain is Large ribosomal subunit protein bL9, found in Campylobacter curvus (strain 525.92).